The primary structure comprises 310 residues: Ribonuclease Z (310 aa).

Residues His-63, His-65, Asp-67, His-68, His-141, Asp-212, and His-270 each coordinate Zn(2+). Asp-67 serves as the catalytic Proton acceptor.

This sequence belongs to the RNase Z family. Homodimer. Zn(2+) serves as cofactor.

The catalysed reaction is Endonucleolytic cleavage of RNA, removing extra 3' nucleotides from tRNA precursor, generating 3' termini of tRNAs. A 3'-hydroxy group is left at the tRNA terminus and a 5'-phosphoryl group is left at the trailer molecule.. Zinc phosphodiesterase, which displays some tRNA 3'-processing endonuclease activity. Probably involved in tRNA maturation, by removing a 3'-trailer from precursor tRNA. This chain is Ribonuclease Z, found in Limosilactobacillus fermentum (strain NBRC 3956 / LMG 18251) (Lactobacillus fermentum).